Reading from the N-terminus, the 508-residue chain is Photosystem II CP47 reaction center protein (508 aa).

Transmembrane regions (helical) follow at residues 21 to 36 (AVHI…WAGS), 101 to 115 (IVFS…TWHW), 140 to 156 (GIHL…FGAF), 203 to 218 (VAAG…FHLS), 237 to 252 (VLSS…AFIV), and 457 to 472 (TFAL…HGAR).

The protein belongs to the PsbB/PsbC family. PsbB subfamily. In terms of assembly, PSII is composed of 1 copy each of membrane proteins PsbA, PsbB, PsbC, PsbD, PsbE, PsbF, PsbH, PsbI, PsbJ, PsbK, PsbL, PsbM, PsbT, PsbX, PsbY, PsbZ, Psb30/Ycf12, at least 3 peripheral proteins of the oxygen-evolving complex and a large number of cofactors. It forms dimeric complexes. Requires Binds multiple chlorophylls. PSII binds additional chlorophylls, carotenoids and specific lipids. as cofactor.

Its subcellular location is the plastid. The protein resides in the chloroplast thylakoid membrane. One of the components of the core complex of photosystem II (PSII). It binds chlorophyll and helps catalyze the primary light-induced photochemical processes of PSII. PSII is a light-driven water:plastoquinone oxidoreductase, using light energy to abstract electrons from H(2)O, generating O(2) and a proton gradient subsequently used for ATP formation. This chain is Photosystem II CP47 reaction center protein, found in Welwitschia mirabilis (Tree tumbo).